Reading from the N-terminus, the 374-residue chain is Chaperone protein DnaJ (374 aa).

Residues 5–70 (CYYEILNVSK…SKRSRYDQFG (66 aa)) form the J domain. Residues 130-207 (GVEKEITIPR…CYGNGKVKKQ (78 aa)) form a CR-type zinc finger. The Zn(2+) site is built by C143, C146, C159, C162, C181, C184, C195, and C198. CXXCXGXG motif repeat units follow at residues 143-150 (CDSCDGTG), 159-166 (CHACHGQG), 181-188 (CPVCNGTG), and 195-202 (CDACYGNG).

This sequence belongs to the DnaJ family. In terms of assembly, homodimer. Zn(2+) serves as cofactor.

Its subcellular location is the cytoplasm. Its function is as follows. Participates actively in the response to hyperosmotic and heat shock by preventing the aggregation of stress-denatured proteins and by disaggregating proteins, also in an autonomous, DnaK-independent fashion. Unfolded proteins bind initially to DnaJ; upon interaction with the DnaJ-bound protein, DnaK hydrolyzes its bound ATP, resulting in the formation of a stable complex. GrpE releases ADP from DnaK; ATP binding to DnaK triggers the release of the substrate protein, thus completing the reaction cycle. Several rounds of ATP-dependent interactions between DnaJ, DnaK and GrpE are required for fully efficient folding. Also involved, together with DnaK and GrpE, in the DNA replication of plasmids through activation of initiation proteins. This is Chaperone protein DnaJ from Francisella tularensis subsp. tularensis (strain FSC 198).